Reading from the N-terminus, the 160-residue chain is Large ribosomal subunit protein uL16 (160 aa).

The interval 138-160 is disordered; sequence KNLEAPSQEKTKNSKKSQEEVKQ.

Belongs to the universal ribosomal protein uL16 family. Part of the 50S ribosomal subunit.

In terms of biological role, binds 23S rRNA and is also seen to make contacts with the A and possibly P site tRNAs. The polypeptide is Large ribosomal subunit protein uL16 (Prochlorococcus marinus (strain MIT 9215)).